The primary structure comprises 486 residues: Transcription enhancer factor-like protein egl-44 (486 aa).

Low complexity predominate over residues G47 to G57. The interval G47–L87 is disordered. The TEA DNA-binding region spans S88–D164. Positions E165–S188 are disordered.

In terms of assembly, interacts (via N-terminus) with egl-46 (via C-terminus); the interaction is direct; the interaction may regulate transcription. Interacts with yap-1 (via WW domain); the interaction may regulate transcription. In terms of tissue distribution, expressed in HSN neurons in embryos and in the FLP neurons from the L1 stage through to adults. Not expressed in touch cells. Also expressed in larval hypodermis, intestine, pharyngeal muscle and other neurons. In adults expression is lost from some neurons, is weaker in the hypodermis but remains in the intestine. Expressed in HOB neuron, ray neurons RnA and RnB, and the ray structural cell, Rnst; rays are male-specific genital sensilla (simple sense organs).

Its subcellular location is the nucleus. Transcription factor. Binds to DNA sequence motif 5'-CATNNNNAAATGCAT-3' as a heterodimer with egl-46. Represses expression of genes involved in differentiation of touch receptor neurons (TRN), probably acting as a heterodimer with egl-46, perhaps by occupying similar cis-regulatory elements as an unc-86/mec-3 heterodimer. Plays a role in cell fate specification of neurons, including the hook neuron HOB, and touch receptor neurons. Involved in male mating behavior, acting in concert with egl-46, via modulation of expression of polycystins lov-1 and pkd-2, homeodomain protein ceh-26, and neuropeptide-like protein nlp-8. Acts upstream of egl-46 to prevent touch cell differentiation in FLP neurons. Plays a role in neuron differentiation by repressing the expression of zag-1 in FLP neurons, probably acting as a heterodimer with egl-46; because zag-1 represses expression of egl-46 and egl-44, together these proteins form a bistable, negative-feedback loop that regulates the choice between neuronal fates. Also promotes HSN neuron development. In association with egl-46, regulates cell cycle exit in the neuronal Q cell lineage. Plays a role in specifying commissural dendrites of the PVD nociceptive neurons, acting in concert with egl-46. May be involved in thermal stress response downstream of yap-1. The chain is Transcription enhancer factor-like protein egl-44 (egl-44) from Caenorhabditis elegans.